The following is a 1249-amino-acid chain: Nuclear envelope pore membrane protein POM 121 (1249 aa).

Positions 1–10 (MSPAAAAAGA) are enriched in low complexity. A disordered region spans residues 1-27 (MSPAAAAAGAGERRRPIASVRDGRGRG). The interval 1-34 (MSPAAAAAGAGERRRPIASVRDGRGRGCGGPARA) is cisternal side. Residues 1 to 285 (MSPAAAAAGA…APPDRRFSRS (285 aa)) are required for targeting to the nucleus and nuclear pore complex. Basic and acidic residues predominate over residues 11–25 (GERRRPIASVRDGRG). The chain crosses the membrane as a helical span at residues 35–55 (VLLGLSLVGLLLYLVPAAAAL). Residues 56-1249 (AWLTVGATAA…QARRQHTRKK (1194 aa)) are pore side. A Phosphoserine modification is found at Ser-94. Disordered regions lie at residues 136–220 (LMGS…CGTL), 319–530 (KEKK…LGYS), 602–776 (KKMQ…PVFS), 959–986 (PLPSYPGANPQPAFGAAEGQPPGAAKPA), and 1226–1249 (IGAGSKTPGARQRLQARRQHTRKK). The span at 168 to 190 (ARPAPRSPPPRSPPPRSPPPSPP) shows a compositional bias: pro residues. A phosphoserine mark is found at Ser-345, Ser-351, Ser-371, Ser-393, and Ser-396. The segment covering 405–423 (IPSSSRNAITSSYSSTRGI) has biased composition (polar residues). A compositionally biased stretch (low complexity) spans 432–445 (PSSSPFSSPASSRS). Basic and acidic residues-rich tracts occupy residues 450 to 462 (RPAKKIREEELCH) and 472 to 486 (ADRESQGEKAADTTP). Residues 491–502 (NSNSQSTPGSSG) are compositionally biased toward polar residues. Residues 635–652 (PPLGLSQSGPPGLLPSPS) are compositionally biased toward low complexity. A compositionally biased stretch (polar residues) spans 683–696 (QAETATKPQATSAP). Composition is skewed to low complexity over residues 712-726 (SPSSPAAPAASSAPP) and 749-770 (SVTATAPSSSSLPTTTSTTAPT). Over residues 1239–1249 (LQARRQHTRKK) the composition is skewed to basic residues.

It belongs to the POM121 family.

The protein resides in the nucleus. It localises to the nuclear pore complex. It is found in the nucleus membrane. The protein localises to the endoplasmic reticulum membrane. Functionally, essential component of the nuclear pore complex (NPC). The repeat-containing domain may be involved in anchoring components of the pore complex to the pore membrane. When overexpressed in cells induces the formation of cytoplasmic annulate lamellae (AL). This chain is Nuclear envelope pore membrane protein POM 121 (POM121), found in Homo sapiens (Human).